The chain runs to 374 residues: Heptahelical transmembrane protein 5 (374 aa).

Topologically, residues 1 to 79 (MGDEAEIKEH…LSIFTIHNET (79 aa)) are cytoplasmic. The helical transmembrane segment at 80–100 (LNVWTHLIGFFLFLALTIYTA) threads the bilayer. At 101 to 191 (TKVPSVVDLH…LIFRPITRWP (91 aa)) the chain is on the extracellular side. The helical transmembrane segment at 192–212 (FYAFLGGAIFCLLASSTCHLL) threads the bilayer. The Cytoplasmic portion of the chain corresponds to 213 to 228 (SCHSERVSYIMLRLDY). Residues 229–249 (AGIAALIATSFYPPVYYSFMC) form a helical membrane-spanning segment. Residues 250–256 (DPFFCNL) lie on the Extracellular side of the membrane. The helical transmembrane segment at 257–277 (YLGFITILGIATVLVSLLPVF) threads the bilayer. Over 278 to 288 (QSLEFRVVRAS) the chain is Cytoplasmic. A helical transmembrane segment spans residues 289 to 309 (LFFGMGFSGLAPILHKLIIFW). Residues 310 to 313 (DQPE) lie on the Extracellular side of the membrane. A helical transmembrane segment spans residues 314–334 (ALHMTGYEILMGLLYGLGAVV). Topologically, residues 335-347 (YATRIPERWMPGK) are cytoplasmic. Residues 348 to 368 (FDIAGHSHQLFHVLVVAGALT) form a helical membrane-spanning segment. The Extracellular segment spans residues 369–374 (HYRAGL).

It belongs to the ADIPOR family. Expressed in roots, leaves, stems and flowers.

The protein localises to the membrane. May play a role in abiotic stress response. The polypeptide is Heptahelical transmembrane protein 5 (HHP5) (Arabidopsis thaliana (Mouse-ear cress)).